The primary structure comprises 252 residues: Imidazole glycerol phosphate synthase subunit HisF (252 aa).

Residues Asp-11 and Asp-130 contribute to the active site.

It belongs to the HisA/HisF family. As to quaternary structure, heterodimer of HisH and HisF.

Its subcellular location is the cytoplasm. It carries out the reaction 5-[(5-phospho-1-deoxy-D-ribulos-1-ylimino)methylamino]-1-(5-phospho-beta-D-ribosyl)imidazole-4-carboxamide + L-glutamine = D-erythro-1-(imidazol-4-yl)glycerol 3-phosphate + 5-amino-1-(5-phospho-beta-D-ribosyl)imidazole-4-carboxamide + L-glutamate + H(+). The protein operates within amino-acid biosynthesis; L-histidine biosynthesis; L-histidine from 5-phospho-alpha-D-ribose 1-diphosphate: step 5/9. In terms of biological role, IGPS catalyzes the conversion of PRFAR and glutamine to IGP, AICAR and glutamate. The HisF subunit catalyzes the cyclization activity that produces IGP and AICAR from PRFAR using the ammonia provided by the HisH subunit. The sequence is that of Imidazole glycerol phosphate synthase subunit HisF from Geobacillus thermodenitrificans (strain NG80-2).